We begin with the raw amino-acid sequence, 260 residues long: Tryptophan 2,3-dioxygenase (260 aa).

Substrate is bound by residues 34 to 38 (FIVIH) and Arg100. Position 219 (His219) interacts with heme. Thr233 lines the substrate pocket.

Belongs to the tryptophan 2,3-dioxygenase family. As to quaternary structure, homotetramer. Heme is required as a cofactor.

The enzyme catalyses L-tryptophan + O2 = N-formyl-L-kynurenine. The protein operates within amino-acid degradation; L-tryptophan degradation via kynurenine pathway; L-kynurenine from L-tryptophan: step 1/2. In terms of biological role, heme-dependent dioxygenase that catalyzes the oxidative cleavage of the L-tryptophan (L-Trp) pyrrole ring and converts L-tryptophan to N-formyl-L-kynurenine. Catalyzes the oxidative cleavage of the indole moiety. The chain is Tryptophan 2,3-dioxygenase from Herpetosiphon aurantiacus (strain ATCC 23779 / DSM 785 / 114-95).